Reading from the N-terminus, the 227-residue chain is Agamous-like MADS-box protein AGL17 (227 aa).

Positions 3 to 57 (RGKIVIQKIDDSTSRQVTFSKRRKGLIKKAKELAILCDAEVCLIIFSNTDKLYDF) constitute an MADS-box domain. The K-box domain occupies 86–176 (VKFWQREAET…SRKVQRIHQE (91 aa)).

As to expression, preferentially expressed in roots.

The protein resides in the nucleus. In terms of biological role, probable transcription factor. This chain is Agamous-like MADS-box protein AGL17 (AGL17), found in Arabidopsis thaliana (Mouse-ear cress).